The sequence spans 505 residues: Tyrosine-protein kinase isoform SRK1 (505 aa).

Polar residues-rich tracts occupy residues 1–10 (MGSCCSSQDG) and 18–31 (AGSTVDSHELSQSV). The segment at 1–53 (MGSCCSSQDGDGNGKATAGSTVDSHELSQSVKGKIKQPEPKPKPPPQVPPAQD) is disordered. In terms of domain architecture, SH3 spans 54 to 116 (VKYPIYVGKY…PSNYVAEYKS (63 aa)). The region spanning 122–214 (WFLGKIKRVE…GLCCKLLYPC (93 aa)) is the SH2 domain. A Protein kinase domain is found at 240-493 (IKLLRRLGAG…TLQWQLEEFF (254 aa)). ATP contacts are provided by residues 246–254 (LGAGQFGEV) and lysine 268. The active-site Proton acceptor is aspartate 359.

Belongs to the protein kinase superfamily. Tyr protein kinase family. SRC subfamily.

The protein localises to the cytoplasm. It catalyses the reaction L-tyrosyl-[protein] + ATP = O-phospho-L-tyrosyl-[protein] + ADP + H(+). The polypeptide is Tyrosine-protein kinase isoform SRK1 (SRK1) (Spongilla lacustris (Freshwater sponge)).